The primary structure comprises 345 residues: MNYKLFSPYTIKDVTLKNRIVMSPMCMYSSENEDGQVTNFHLVHYGTRAAGQVGLVMIEATAVLPGGRISNKDLGIWDDSLIEGLHKTTTFIHDNGAKAAIQLAHAGRKAELETDALAPSAVPFNETMKTPVEMSKHQIKDTVLAFQQAAIRSKQAGFDVIEIHGAHGYLINEFLSPLSNKRTDEYGGSPENRYRFLREIIDSINEVWNGPLFVRISANDYHPDGLTVQDYVQYTKWMKEQGVDLIDCSSGAVVPARIDVYPGYQVQYAKHIKEHANIATGAVGLITTGAQAEQILTNNEADLIFIGRELLRNPYFPRIAANELGFELEEPYQYERAPGKISTNK.

FMN is bound at residue 23-26; it reads SPMC. Y28 serves as a coordination point for substrate. A60 and Q102 together coordinate FMN. A substrate-binding site is contributed by 164–167; the sequence is HGAH. FMN contacts are provided by residues R215 and 307 to 308; that span reads GR.

It belongs to the NADH:flavin oxidoreductase/NADH oxidase family. NamA subfamily. Homotetramer. It depends on FMN as a cofactor.

It carries out the reaction A + NADPH + H(+) = AH2 + NADP(+). Functionally, catalyzes the reduction of the double bond of an array of alpha,beta-unsaturated aldehydes and ketones. It also reduces the nitro group of nitroester and nitroaromatic compounds. It could have a role in detoxification processes. This Bacillus cereus (strain AH820) protein is NADPH dehydrogenase.